Reading from the N-terminus, the 151-residue chain is Cytochrome c oxidase-assembly factor COX23, mitochondrial (151 aa).

The N-terminal 10 residues, methionine 1 to glutamine 10, are a transit peptide targeting the mitochondrion. The tract at residues methionine 1–proline 86 is disordered. The segment covering threonine 7–serine 18 has biased composition (polar residues). Residues asparagine 19–proline 51 are compositionally biased toward low complexity. The 43-residue stretch at tyrosine 101–arginine 143 folds into the CHCH domain. Short sequence motifs (cx9C motif) lie at residues cysteine 104–cysteine 114 and cysteine 125–cysteine 135. Intrachain disulfides connect cysteine 104–cysteine 135 and cysteine 114–cysteine 125.

It belongs to the COX23 family.

The protein resides in the cytoplasm. It is found in the mitochondrion intermembrane space. Required for the assembly of cytochrome c oxidase. The protein is Cytochrome c oxidase-assembly factor COX23, mitochondrial (COX23) of Saccharomyces cerevisiae (strain ATCC 204508 / S288c) (Baker's yeast).